Consider the following 430-residue polypeptide: Enolase (430 aa).

Q167 lines the (2R)-2-phosphoglycerate pocket. The active-site Proton donor is E209. Mg(2+) is bound by residues D246, E287, and D314. Residues K339, R368, and S369 each contribute to the (2R)-2-phosphoglycerate site. The Proton acceptor role is filled by K339.

This sequence belongs to the enolase family. Requires Mg(2+) as cofactor.

The protein localises to the cytoplasm. The protein resides in the secreted. It is found in the cell surface. It carries out the reaction (2R)-2-phosphoglycerate = phosphoenolpyruvate + H2O. The protein operates within carbohydrate degradation; glycolysis; pyruvate from D-glyceraldehyde 3-phosphate: step 4/5. Its function is as follows. Catalyzes the reversible conversion of 2-phosphoglycerate (2-PG) into phosphoenolpyruvate (PEP). It is essential for the degradation of carbohydrates via glycolysis. In Synechococcus sp. (strain ATCC 27144 / PCC 6301 / SAUG 1402/1) (Anacystis nidulans), this protein is Enolase.